The chain runs to 32 residues: FEVYWNVPTLQCRAVYKMIFKLNRTYGIQXNA.

Asn-23 carries N-linked (GlcNAc...) asparagine glycosylation.

It belongs to the glycosyl hydrolase 56 family. Expressed by the venom gland.

Its subcellular location is the secreted. The catalysed reaction is Random hydrolysis of (1-&gt;4)-linkages between N-acetyl-beta-D-glucosamine and D-glucuronate residues in hyaluronate.. In terms of biological role, hydrolyzes high molecular weight hyaluronic acid to produce small oligosaccharides. The sequence is that of Hyaluronidase-Pk1a from Phoneutria keyserlingi (Brazilian wandering spider).